Reading from the N-terminus, the 176-residue chain is Large ribosomal subunit protein uL16 (176 aa).

Belongs to the universal ribosomal protein uL16 family.

The polypeptide is Large ribosomal subunit protein uL16 (Sulfolobus acidocaldarius (strain ATCC 33909 / DSM 639 / JCM 8929 / NBRC 15157 / NCIMB 11770)).